Here is a 436-residue protein sequence, read N- to C-terminus: Glutamate-1-semialdehyde 2,1-aminomutase (436 aa).

Position 270 is an N6-(pyridoxal phosphate)lysine (Lys-270).

Belongs to the class-III pyridoxal-phosphate-dependent aminotransferase family. HemL subfamily. As to quaternary structure, homodimer. It depends on pyridoxal 5'-phosphate as a cofactor.

Its subcellular location is the cytoplasm. The enzyme catalyses (S)-4-amino-5-oxopentanoate = 5-aminolevulinate. It functions in the pathway porphyrin-containing compound metabolism; protoporphyrin-IX biosynthesis; 5-aminolevulinate from L-glutamyl-tRNA(Glu): step 2/2. The polypeptide is Glutamate-1-semialdehyde 2,1-aminomutase (Cutibacterium acnes (strain DSM 16379 / KPA171202) (Propionibacterium acnes)).